A 672-amino-acid chain; its full sequence is Prion-like-(Q/N-rich) domain-bearing protein 25 (672 aa).

A helical membrane pass occupies residues 26–46 (VPPPIMICLFFLLLQIFVISV).

The protein localises to the membrane. The protein is Prion-like-(Q/N-rich) domain-bearing protein 25 (pqn-25) of Caenorhabditis elegans.